The primary structure comprises 879 residues: Aminopeptidase M1 (879 aa).

A required for membrane association region spans residues 98–205 (HGVGVLKLGF…MSTYLVAIVV (108 aa)). Residues Glu138 and 271–275 (GAMEN) each bind substrate. His307 lines the Zn(2+) pocket. Residue Glu308 is the Proton acceptor of the active site. Residues His311 and Glu330 each contribute to the Zn(2+) site. A Dileucine internalization motif motif is present at residues 728 to 729 (LL).

It belongs to the peptidase M1 family. As to quaternary structure, homodimer. Interacts with N-1-naphthylphthalamic acid (NPA). Requires Zn(2+) as cofactor. Ubiquitous with preferential expression in 5 days-old seedlings, roots, young flowers, upper inflorescence stems, and rosette leaves.

It localises to the membrane. It is found in the microsome membrane. Its subcellular location is the cytoplasm. It carries out the reaction Release of an N-terminal amino acid, Xaa-|-Yaa- from a peptide, amide or arylamide. Xaa is preferably Ala, but may be most amino acids including Pro (slow action). When a terminal hydrophobic residue is followed by a prolyl residue, the two may be released as an intact Xaa-Pro dipeptide.. In terms of biological role, metallopeptidase that binds to the auxin transport inhibitor N-1-naphthylphthalamic acid (NPA). Required for embryonic and seedling development as well as cell cycle progression. Homodimerization is required to proper localization and activity. May play a negative role in the regulation of PIN auxin transport proteins. This chain is Aminopeptidase M1 (APM1), found in Arabidopsis thaliana (Mouse-ear cress).